Consider the following 672-residue polypeptide: UvrABC system protein B (672 aa).

Positions 26–181 (AGLEDGLAYQ…ILQRLAELQY (156 aa)) constitute a Helicase ATP-binding domain. 39-46 (GVTGSGKT) provides a ligand contact to ATP. The Beta-hairpin motif lies at 92–115 (YYDYYQPEAYVPSSDTYIEKDASI). A Helicase C-terminal domain is found at 430-592 (QVDDLLSEIK…ITPKSIQKAV (163 aa)). A UVR domain is found at 631–666 (AKELRKLEEQMYHHARNLEFEEAAAVRDKIQHIRKG).

This sequence belongs to the UvrB family. In terms of assembly, forms a heterotetramer with UvrA during the search for lesions. Interacts with UvrC in an incision complex.

The protein resides in the cytoplasm. Functionally, the UvrABC repair system catalyzes the recognition and processing of DNA lesions. A damage recognition complex composed of 2 UvrA and 2 UvrB subunits scans DNA for abnormalities. Upon binding of the UvrA(2)B(2) complex to a putative damaged site, the DNA wraps around one UvrB monomer. DNA wrap is dependent on ATP binding by UvrB and probably causes local melting of the DNA helix, facilitating insertion of UvrB beta-hairpin between the DNA strands. Then UvrB probes one DNA strand for the presence of a lesion. If a lesion is found the UvrA subunits dissociate and the UvrB-DNA preincision complex is formed. This complex is subsequently bound by UvrC and the second UvrB is released. If no lesion is found, the DNA wraps around the other UvrB subunit that will check the other stand for damage. The chain is UvrABC system protein B from Coxiella burnetii (strain CbuK_Q154) (Coxiella burnetii (strain Q154)).